Consider the following 327-residue polypeptide: tRNA dimethylallyltransferase (327 aa).

14 to 21 (GPTASGKT) contacts ATP. 16–21 (TASGKT) lines the substrate pocket. 2 interaction with substrate tRNA regions span residues 39–42 (DSAL) and 163–167 (QRIQR).

It belongs to the IPP transferase family. As to quaternary structure, monomer. Requires Mg(2+) as cofactor.

The catalysed reaction is adenosine(37) in tRNA + dimethylallyl diphosphate = N(6)-dimethylallyladenosine(37) in tRNA + diphosphate. Functionally, catalyzes the transfer of a dimethylallyl group onto the adenine at position 37 in tRNAs that read codons beginning with uridine, leading to the formation of N6-(dimethylallyl)adenosine (i(6)A). The chain is tRNA dimethylallyltransferase from Xanthomonas oryzae pv. oryzae (strain MAFF 311018).